A 587-amino-acid chain; its full sequence is MFS-type transporter opaD (587 aa).

The next 9 membrane-spanning stretches (helical) occupy residues 87–107, 124–146, 153–173, 184–204, 214–234, 242–262, 284–304, 315–335, and 357–377; these read VAIM…NTIL, MGWY…GKLL, WVYI…GVSP, ISGT…TIIV, GILS…GGAF, WCFY…LLLF, IIGL…LQWG, IIAL…VEYW, and LFTF…PIWF. The N-linked (GlcNAc...) asparagine glycan is linked to N382. 5 helical membrane-spanning segments follow: residues 393–413, 414–434, 447–467, 483–503, and 554–574; these read IPLI…VTTL, GYYI…AGLL, IGFQ…PLVV, LVTL…QSVF, and VYLV…PIRW.

It belongs to the major facilitator superfamily. TCR/Tet family.

It localises to the membrane. Functionally, MFS-type transporter; part of the gene cluster that mediates the biosynthesis of oxepinamides, derivatives of anthranilyl-containing tripeptides that share an oxepin ring and a fused pyrimidinone moiety. In Aspergillus ustus, this protein is MFS-type transporter opaD.